A 372-amino-acid chain; its full sequence is THAP domain-containing protein 5 (372 aa).

A THAP-type zinc finger spans residues Met-1–Phe-85. The stretch at Thr-306–Asn-362 forms a coiled coil.

The protein resides in the nucleus. The protein is THAP domain-containing protein 5 (thap5) of Xenopus laevis (African clawed frog).